The chain runs to 331 residues: Beta-ketoacyl-[acyl-carrier-protein] synthase III (331 aa).

Active-site residues include cysteine 113 and histidine 256. Residues 257 to 261 (QANKR) are ACP-binding. Residue asparagine 286 is part of the active site.

The protein belongs to the thiolase-like superfamily. FabH family. Homodimer.

The protein resides in the cytoplasm. The catalysed reaction is malonyl-[ACP] + acetyl-CoA + H(+) = 3-oxobutanoyl-[ACP] + CO2 + CoA. The protein operates within lipid metabolism; fatty acid biosynthesis. Its function is as follows. Catalyzes the condensation reaction of fatty acid synthesis by the addition to an acyl acceptor of two carbons from malonyl-ACP. Catalyzes the first condensation reaction which initiates fatty acid synthesis and may therefore play a role in governing the total rate of fatty acid production. Possesses both acetoacetyl-ACP synthase and acetyl transacylase activities. Its substrate specificity determines the biosynthesis of branched-chain and/or straight-chain of fatty acids. The protein is Beta-ketoacyl-[acyl-carrier-protein] synthase III of Solibacter usitatus (strain Ellin6076).